A 99-amino-acid polypeptide reads, in one-letter code: Integration host factor subunit alpha (99 aa).

Belongs to the bacterial histone-like protein family. Heterodimer of an alpha and a beta chain.

This protein is one of the two subunits of integration host factor, a specific DNA-binding protein that functions in genetic recombination as well as in transcriptional and translational control. This Xanthomonas axonopodis pv. citri (strain 306) protein is Integration host factor subunit alpha (ihfA).